Here is a 71-residue protein sequence, read N- to C-terminus: Immune-induced peptide 18 (71 aa).

A signal peptide spans 1–24 (MKLIALCCLLLLGLLGFLAAPGVA). A propeptide spanning residues 25-26 (SP) is cleaved from the precursor. A disordered region spans residues 26-71 (PSRHTGPGNGSGSGAGSGNPFRSPSSQQRPLYYDAPIGKPSKTMYA). The span at 32–42 (PGNGSGSGAGS) shows a compositional bias: gly residues.

In terms of tissue distribution, hemolymph (at protein level).

Its subcellular location is the secreted. This chain is Immune-induced peptide 18 (IM18), found in Drosophila melanogaster (Fruit fly).